We begin with the raw amino-acid sequence, 400 residues long: Enoyl-[acyl-carrier-protein] reductase [NADH] 2 (400 aa).

Residues 48–53 (GASSGF), 75–76 (FE), 112–113 (DA), and 141–142 (LA) each bind NAD(+). Y227 contacts substrate. Y237 serves as the catalytic Proton donor. NAD(+) contacts are provided by residues K246 and 275–277 (LVT).

It belongs to the TER reductase family. Monomer.

The enzyme catalyses a 2,3-saturated acyl-[ACP] + NAD(+) = a (2E)-enoyl-[ACP] + NADH + H(+). Its pathway is lipid metabolism; fatty acid biosynthesis. In terms of biological role, involved in the final reduction of the elongation cycle of fatty acid synthesis (FAS II). Catalyzes the reduction of a carbon-carbon double bond in an enoyl moiety that is covalently linked to an acyl carrier protein (ACP). The chain is Enoyl-[acyl-carrier-protein] reductase [NADH] 2 from Photobacterium profundum (strain SS9).